A 180-amino-acid polypeptide reads, in one-letter code: D-lyxose ketol-isomerase (180 aa).

Lys62 is a binding site for D-fructose. Mn(2+) contacts are provided by His75 and His77. Lys86 is a D-fructose binding site. Mn(2+) contacts are provided by Glu88 and His143. Residues Glu156, Asp166, and Arg175 each coordinate D-fructose.

It belongs to the D-lyxose ketol-isomerase family. Homodimer; disulfide-linked. Stabilized by a disulfide bond between the two monomers of the dimeric enzyme and increased hydrophobicity at the dimer interface. Requires Mn(2+) as cofactor.

The catalysed reaction is D-lyxose = D-xylulose. Its function is as follows. Sugar isomerase that catalyzes the reversible isomerization of D-lyxose to D-xylulose. Is highly specific for the substrate D-lyxose, showing less than 2% activity towards mannose and other substrates reported for lyxose isomerases. This is D-lyxose ketol-isomerase from Thermofilum sp. (strain ex4484_79).